The chain runs to 476 residues: Argininosuccinate lyase (476 aa).

Over residues 1–17 (MTDTGSSDTNTDTTGTS) the composition is skewed to low complexity. The segment at 1–22 (MTDTGSSDTNTDTTGTSKANTM) is disordered.

Belongs to the lyase 1 family. Argininosuccinate lyase subfamily.

Its subcellular location is the cytoplasm. The enzyme catalyses 2-(N(omega)-L-arginino)succinate = fumarate + L-arginine. It participates in amino-acid biosynthesis; L-arginine biosynthesis; L-arginine from L-ornithine and carbamoyl phosphate: step 3/3. This Jannaschia sp. (strain CCS1) protein is Argininosuccinate lyase.